Here is a 997-residue protein sequence, read N- to C-terminus: Autophagy-related protein 9 (997 aa).

Over 1 to 318 (MERDEYQLPN…DVYNYYLGNG (318 aa)) the chain is Cytoplasmic. Position 19 is a phosphoserine; by ATG1 (Ser19). The span at 29-39 (VNPSLNSQEMS) shows a compositional bias: polar residues. A disordered region spans residues 29–88 (VNPSLNSQEMSNFPLPDIERGSSLLHSTNDSREDVDENDLRVPESDQGTSTEEEDEVDEE). The span at 79–88 (TEEEDEVDEE) shows a compositional bias: acidic residues. Residues Lys113 and Lys121 each participate in a glycyl lysine isopeptide (Lys-Gly) (interchain with G-Cter in ubiquitin) cross-link. A Phosphoserine modification is found at Ser122. Disordered regions lie at residues 128-159 (VEGS…DGFD) and 213-235 (IHHD…QKHG). Residue Lys138 forms a Glycyl lysine isopeptide (Lys-Gly) (interchain with G-Cter in ubiquitin) linkage. Ser143 and Ser144 each carry phosphoserine. Residues 144 to 159 (SEEEEDNEFINNDGFD) show a composition bias toward acidic residues. Residues 221-233 (ANNGPRNINGNQK) are compositionally biased toward polar residues. The chain crosses the membrane as a helical span at residues 319–339 (FYCIILEKILNICTLLFVVFV). Residues 340–376 (STYMGHCVDYSKLPTSHRVSDIIIDKCYSNSITGFTK) lie on the Lumenal side of the membrane. Residues 377 to 397 (FFLWMFYFFVILKIVQLYFDV) traverse the membrane as a helical segment. The Cytoplasmic segment spans residues 398 to 538 (QKLSELQNFY…EELQKRFMLA (141 aa)). Residues 539–559 (GFLNIILAPFLVTYFVLLYFF) lie within the membrane without spanning it. Residues 560-620 (RYFNEYKTSP…DQFPKEKTNL (61 aa)) are Cytoplasmic-facing. A helical transmembrane segment spans residues 621-641 (FLKFVSFICGSFVAILAFLTV). The Lumenal portion of the chain corresponds to 642–656 (FDPENFLNFEITSDR). Ser657 bears the Phosphoserine; by ATG1 mark. Residues 657–677 (SVIFYITILGAIWSVSRNTIT) form a helical membrane-spanning segment. Topologically, residues 678-723 (QEYHVFDPEETLKELYEYTHYLPKEWEGRYHKEEIKLEFCKLYNLR) are cytoplasmic. Lys701 participates in a covalent cross-link: Glycyl lysine isopeptide (Lys-Gly) (interchain with G-Cter in ubiquitin). The stretch at 724-744 (IVILLRELTSLMITPFVLWFS) is an intramembrane region. Over 745-997 (LPSSAGRIVD…EYYKKSDVGR (253 aa)) the chain is Cytoplasmic. Phosphoserine occurs at positions 787 and 792. The residue at position 794 (Thr794) is a Phosphothreonine. The residue at position 802 (Ser802) is a Phosphoserine; by ATG1. Residue Thr804 is modified to Phosphothreonine; by ATG1. Phosphoserine; by ATG1 occurs at positions 831 and 842. Ser864 carries the post-translational modification Phosphoserine. Phosphoserine; by ATG1 occurs at positions 948 and 969.

The protein belongs to the ATG9 family. In terms of assembly, homotrimer; forms a homotrimer with a central pore that forms a path between the two membrane leaflets. Interacts with ATG23 and ATG27 to form a cycling complex for trafficking to the PAS. Interacts (via N-terminus) with ATG11, required for recruitment of ATG9 to the PAS for the Cvt pathway during nutrient-rich conditions. Interacts (via N-terminus) with ATG17; required for recruitment to the PAS during autophagy and starved conditions. Interacts with ATG2 and ATG18; required for the retrieval of ATG9 from the PAS to the cytoplasmic pool. Interacts with ATG41. Interacts with the conserved oligomeric Golgi (COG) complex subunits COG3 and COG4. Interacts with TRS85. Post-translationally, phosphorylated by ATG1; phosphorylation is required for autophagy and cytoplasm to vacuole transport (Cvt) vesicle formation. Phosphorylation by ATG1 regulates ATG18 interaction and preautophagosome elongation. Phosphorylation at Ser-122 is required for selective autophagy by regulating anterograde trafficking and interaction with ATG23 and ATG27. Phosphorylation at Ser-122 prevents ubiquitination by the SCF(MET30) complex. In terms of processing, ubiquitinated by the SCF(MET30) complex in normal conditions, leading to its degradation by the proteasome, thereby preventing inappropriate induction of autophagy. Ubiquitination by the SCF(MET30) complex is prevented by phosphorylation at Ser-122.

Its subcellular location is the preautophagosomal structure membrane. It is found in the cytoplasmic vesicle membrane. The protein resides in the golgi apparatus membrane. The protein localises to the endoplasmic reticulum membrane. It localises to the mitochondrion membrane. The catalysed reaction is a 1,2-diacyl-sn-glycero-3-phosphocholine(in) = a 1,2-diacyl-sn-glycero-3-phosphocholine(out). The enzyme catalyses a 1,2-diacyl-sn-glycero-3-phospho-L-serine(in) = a 1,2-diacyl-sn-glycero-3-phospho-L-serine(out). It carries out the reaction a 1,2-diacyl-sn-glycero-3-phosphoethanolamine(in) = a 1,2-diacyl-sn-glycero-3-phosphoethanolamine(out). It catalyses the reaction a 1,2-diacyl-sn-glycero-3-phospho-(1D-myo-inositol-3-phosphate)(in) = a 1,2-diacyl-sn-glycero-3-phospho-(1D-myo-inositol-3-phosphate)(out). Functionally, phospholipid scramblase involved in autophagy and cytoplasm to vacuole transport (Cvt) vesicle formation. Cycles between the preautophagosomal structure/phagophore assembly site (PAS) and the cytoplasmic vesicle pool and supplies membrane for the growing autophagosome. Lipid scramblase activity plays a key role in preautophagosomal structure/phagophore assembly by distributing the phospholipids that arrive through ATG2 from the cytoplasmic to the luminal leaflet of the bilayer, thereby driving autophagosomal membrane expansion. Required for mitophagy. Also involved in endoplasmic reticulum-specific autophagic process and is essential for the survival of cells subjected to severe ER stress. Recruits vesicle-tethering proteins TRS85 and YPT1 to the autophagosome formation site. Also recruits ATG23 and ATG8 to the PAS. In Saccharomyces cerevisiae (strain ATCC 204508 / S288c) (Baker's yeast), this protein is Autophagy-related protein 9.